Here is a 380-residue protein sequence, read N- to C-terminus: Apelin receptor (380 aa).

Residues 1–30 (MEEGGDFDNYYGADNQSECEYTDWKSSGAL) lie on the Extracellular side of the membrane. Asparagine 15 carries N-linked (GlcNAc...) asparagine glycosylation. Disulfide bonds link cysteine 19-cysteine 281 and cysteine 102-cysteine 181. A helical transmembrane segment spans residues 31-54 (IPAIYMLVFLLGTTGNGLVLWTVF). Topologically, residues 55–64 (RSSREKRRSA) are cytoplasmic. The helical transmembrane segment at 65–86 (DIFIASLAVADLTFVVTLPLWA) threads the bilayer. Over 87–99 (TYTYRDYDWPFGT) the chain is Extracellular. Residues 100 to 125 (FSCKLSSYLIFVNMYASVFCLTGLSF) traverse the membrane as a helical segment. The Cytoplasmic segment spans residues 126 to 146 (DRYLAIVRPVANARLRLRVSG). The chain crosses the membrane as a helical span at residues 147–164 (AVATAVLWVLAALLAMPV). At 165–198 (MVFRTTGDLENTTKVQCYMDYSMVATVSSDWAWE) the chain is on the extracellular side. Asparagine 175 carries N-linked (GlcNAc...) asparagine glycosylation. Residues 199-223 (VGLGVSSTTVGFVVPFTIMLTCYFF) form a helical membrane-spanning segment. The Cytoplasmic segment spans residues 224 to 246 (IAQTIAGHFRKERIEGLRKRRRL). Residues 247–270 (LSIIVVLVVTFALCWMPYHLVKTL) form a helical membrane-spanning segment. Over 271–289 (YMLGSLLHWPCDFDLFLMN) the chain is Extracellular. A helical membrane pass occupies residues 290 to 312 (VFPYCTCISYVNSCLNPFLYAFF). The Cytoplasmic portion of the chain corresponds to 313–380 (DPRFRQACTS…PYSQETLVVD (68 aa)). The span at 342-351 (KSASYSSGHS) shows a compositional bias: low complexity. Residues 342–380 (KSASYSSGHSQGPGPNMGKGGEQMHEKSIPYSQETLVVD) are disordered. Over residues 371 to 380 (PYSQETLVVD) the composition is skewed to polar residues.

It belongs to the G-protein coupled receptor 1 family. In terms of assembly, homodimer; dimerization inhibits APLNR-mediated G protein and beta-arrestin signaling pathways compared to monomeric APLNR.

It localises to the cell membrane. G protein-coupled receptor for peptide hormones apelin (APLN) and apelin receptor early endogenous ligand (APELA/ELA), that plays a role in the regulation of normal cardiovascular function and fluid homeostasis. When acting as apelin receptor, activates both G(i) protein pathway that inhibits adenylate cyclase activity, and the beta-arrestin pathway that promotes internalization of the receptor. APLNR/APJ also functions as mechanoreceptor that is activated by pathological stimuli in a G-protein-independent fashion to induce beta-arrestin signaling, hence eliciting cardiac hypertrophy. However, the presence of apelin ligand blunts cardiac hypertrophic induction from APLNR/APJ on response to pathological stimuli. Plays a key role in early development such as gastrulation, blood vessels formation and heart morphogenesis by acting as a APELA receptor. May promote angioblast migration toward the embryonic midline, i.e. the position of the future vessel formation, during vasculogenesis. Promotes sinus venosus (SV)-derived endothelial cells migration into the developing heart to promote coronary blood vessel development. Also plays a role in various processes in adults such as regulation of blood vessel formation, blood pressure, heart contractility and heart failure. Its function is as follows. (Microbial infection) Alternative coreceptor with CD4 for HIV-1 infection; may be involved in the development of AIDS dementia. The sequence is that of Apelin receptor (APLNR) from Macaca mulatta (Rhesus macaque).